Consider the following 542-residue polypeptide: FACT complex subunit POB3 (542 aa).

A disordered region spans residues 458-542 (RVKNEEKETQ…DRPSKKAKLA (85 aa)). Acidic residues-rich tracts occupy residues 477 to 514 (DSEDEDVNMGSAAEDDESVDEDFQAESEDDDVAEEFDS) and 521 to 530 (SETEAADGAD).

It belongs to the SSRP1 family. Forms a stable heterodimer with SPT16. The SPT16-POB3 dimer weakly associates with multiple molecules of NHP6 to form the FACT complex.

It localises to the nucleus. The protein localises to the chromosome. In terms of biological role, component of the FACT complex, a general chromatin factor that acts to reorganize nucleosomes. The FACT complex is involved in multiple processes that require DNA as a template such as mRNA elongation, DNA replication and DNA repair. During transcription elongation the FACT complex acts as a histone chaperone that both destabilizes and restores nucleosomal structure. It facilitates the passage of RNA polymerase II and transcription by promoting the dissociation of one histone H2A-H2B dimer from the nucleosome, then subsequently promotes the reestablishment of the nucleosome following the passage of RNA polymerase II. The chain is FACT complex subunit POB3 (POB3) from Eremothecium gossypii (strain ATCC 10895 / CBS 109.51 / FGSC 9923 / NRRL Y-1056) (Yeast).